The following is a 325-amino-acid chain: Ribose-phosphate pyrophosphokinase 2 (325 aa).

96–101 provides a ligand contact to ATP; it reads RQDKKD. The Mg(2+) site is built by Asp135, His137, Asp146, and Asp150. His137 contacts ATP. Residues 219–234 are binding of phosphoribosylpyrophosphate; it reads KDRVAILVDDMADTCG.

This sequence belongs to the ribose-phosphate pyrophosphokinase family. As to quaternary structure, homodimer. The active form is probably a hexamer composed of 3 homodimers. It depends on Mg(2+) as a cofactor.

It catalyses the reaction D-ribose 5-phosphate + ATP = 5-phospho-alpha-D-ribose 1-diphosphate + AMP + H(+). Its pathway is metabolic intermediate biosynthesis; 5-phospho-alpha-D-ribose 1-diphosphate biosynthesis; 5-phospho-alpha-D-ribose 1-diphosphate from D-ribose 5-phosphate (route I): step 1/1. Its activity is regulated as follows. Activated by magnesium and inorganic phosphate. Competitively or non-competitively inhibited by ADP, 2,3-bisphosphoglyceride or GDP. Its function is as follows. Catalyzes the synthesis of phosphoribosylpyrophosphate (PRPP) that is essential for nucleotide synthesis. This is Ribose-phosphate pyrophosphokinase 2 (PRPS2) from Gallus gallus (Chicken).